The sequence spans 243 residues: Histone H2B.2 (243 aa).

N,N,N-trimethylalanine; alternate is present on Ala2. Residue Ala2 is modified to N,N-dimethylalanine; alternate. Ala2 is subject to N-methylalanine; alternate. A disordered region spans residues 67–145 (PDERSLPVGE…KKKKKKKRDD (79 aa)). Over residues 120–132 (GTLKKTDKVEKKQ) the composition is skewed to basic and acidic residues. Residues 133–142 (ENKKKKKKKK) are compositionally biased toward basic residues.

The protein belongs to the histone H2B family. As to quaternary structure, the nucleosome is a histone octamer containing two molecules each of H2A, H2B, H3 and H4 assembled in one H3-H4 heterotetramer and two H2A-H2B heterodimers. The octamer wraps approximately 147 bp of DNA. In terms of processing, can be acetylated to form H2BK6ac.

It is found in the nucleus. Its subcellular location is the chromosome. Core component of nucleosome. Nucleosomes wrap and compact DNA into chromatin, limiting DNA accessibility to the cellular machineries which require DNA as a template. Histones thereby play a central role in transcription regulation, DNA repair, DNA replication and chromosomal stability. DNA accessibility is regulated via a complex set of post-translational modifications of histones, also called histone code, and nucleosome remodeling. This is Histone H2B.2 from Arabidopsis thaliana (Mouse-ear cress).